A 371-amino-acid chain; its full sequence is DNA replication and repair protein RecF (371 aa).

ATP is bound at residue 30–37 (GENAQGKT).

Belongs to the RecF family.

It localises to the cytoplasm. The RecF protein is involved in DNA metabolism; it is required for DNA replication and normal SOS inducibility. RecF binds preferentially to single-stranded, linear DNA. It also seems to bind ATP. In Staphylococcus epidermidis (strain ATCC 35984 / DSM 28319 / BCRC 17069 / CCUG 31568 / BM 3577 / RP62A), this protein is DNA replication and repair protein RecF.